A 206-amino-acid polypeptide reads, in one-letter code: Imidazoleglycerol-phosphate dehydratase (206 aa).

The protein belongs to the imidazoleglycerol-phosphate dehydratase family.

The protein resides in the cytoplasm. The enzyme catalyses D-erythro-1-(imidazol-4-yl)glycerol 3-phosphate = 3-(imidazol-4-yl)-2-oxopropyl phosphate + H2O. The protein operates within amino-acid biosynthesis; L-histidine biosynthesis; L-histidine from 5-phospho-alpha-D-ribose 1-diphosphate: step 6/9. In Synechococcus sp. (strain JA-3-3Ab) (Cyanobacteria bacterium Yellowstone A-Prime), this protein is Imidazoleglycerol-phosphate dehydratase.